Consider the following 192-residue polypeptide: Ion-translocating oxidoreductase complex subunit A (192 aa).

A run of 6 helical transmembrane segments spans residues 5–25 (LLLL…FLGL), 39–59 (IGMG…AYLV), 63–83 (ILTP…VIAV), 102–122 (LLGI…VALL), 134–154 (IIYG…FAAM), and 171–191 (SIAM…TGLV).

Belongs to the NqrDE/RnfAE family. As to quaternary structure, the complex is composed of six subunits: RnfA, RnfB, RnfC, RnfD, RnfE and RnfG.

The protein localises to the cell inner membrane. Part of a membrane-bound complex that couples electron transfer with translocation of ions across the membrane. The chain is Ion-translocating oxidoreductase complex subunit A from Vibrio atlanticus (strain LGP32) (Vibrio splendidus (strain Mel32)).